The following is a 651-amino-acid chain: Probable export ATP-binding/permease protein Pfl01_2215 (651 aa).

The ABC transporter domain maps to 6 to 244 (LQLTGISRSF…LSNEDAVPKS (239 aa)). 42-49 (GASGSGKS) lines the ATP pocket. The next 5 helical transmembrane spans lie at 250-270 (LVASLGLFKEAFNMAWVALIS), 276-296 (LLTMLGIVIGITSVVSISAIG), 524-544 (LALLLSLIAVISLVVGGIGVM), 585-605 (LGGAIGISLSYAIGHLFSLFI), and 614-634 (LTSVLTAVICSTLIGIVFGFV).

This sequence belongs to the ABC transporter superfamily. Macrolide exporter (TC 3.A.1.122) family. As to quaternary structure, probably part of a tripartite efflux system, which is composed of an inner membrane transporter, a periplasmic membrane fusion protein, and an outer membrane component.

The protein resides in the cell inner membrane. Functionally, probably part of a tripartite efflux system. The sequence is that of Probable export ATP-binding/permease protein Pfl01_2215 from Pseudomonas fluorescens (strain Pf0-1).